A 264-amino-acid chain; its full sequence is H-2 class II histocompatibility antigen, E-B beta chain (264 aa).

Positions 1–26 are cleaved as a signal peptide; sequence MVWLPRVPCVAAVILLLTVLSPPMAL. Positions 27–121 are beta-1; it reads VRDSRPWFLE…ISDKFLVRRR (95 aa). Topologically, residues 27–225 are extracellular; that stretch reads VRDSRPWFLE…KAQSTSAQNK (199 aa). 2 cysteine pairs are disulfide-bonded: Cys38–Cys106 and Cys144–Cys200. Residue Asn46 is glycosylated (N-linked (GlcNAc...) asparagine). A beta-2 region spans residues 122–225; it reads VEPTVTVYPT…KAQSTSAQNK (104 aa). An Ig-like C1-type domain is found at 124-214; that stretch reads PTVTVYPTKT…PSLTDPVTVE (91 aa). A helical transmembrane segment spans residues 226–246; sequence MLSGVGGFVLGLLFLGAGLFI. At 247–264 the chain is on the cytoplasmic side; that stretch reads YFRNQKGQSGLQPTGLLS.

This sequence belongs to the MHC class II family. Post-translationally, ubiquitinated in immature dendritic cells leading to down-regulation of MHC class II.

The protein resides in the membrane. The protein is H-2 class II histocompatibility antigen, E-B beta chain (H2-Eb1) of Mus musculus (Mouse).